The chain runs to 911 residues: DNA ligase 4 (911 aa).

Residues glutamate 271, threonine 272, lysine 273, leucine 274, arginine 278, glutamate 331, lysine 345, phenylalanine 367, glutamate 427, lysine 432, lysine 449, and lysine 451 each coordinate ATP. Lysine 273 (N6-AMP-lysine intermediate) is an active-site residue. Residue glutamate 331 coordinates Mg(2+). Glutamate 427 contacts Mg(2+). The tract at residues 610–620 (LATKHLHVGDD) is required for catalytic activity. 2 BRCT domains span residues 654–743 (KVSN…PRFM) and 808–911 (SPLS…QYLL).

This sequence belongs to the ATP-dependent DNA ligase family. Interacts with XRCC4; the LIG4-XRCC4 subcomplex has a 1:2 stoichiometry and XRCC4 is required for LIG4 stability. Component of the core long-range non-homologous end joining (NHEJ) complex (also named DNA-PK complex) composed of PRKDC, LIG4, XRCC4, XRCC6/Ku70, XRCC5/Ku86 and NHEJ1/XLF. Additional component of the NHEJ complex includes PAXX. Following autophosphorylation, PRKDC dissociates from DNA, leading to formation of the short-range NHEJ complex, composed of LIG4, XRCC4, XRCC6/Ku70, XRCC5/Ku86 and NHEJ1/XLF. Interacts with DCLRE1C; the interaction is direct. Interacts with APLF. The cofactor is Mg(2+).

The protein resides in the nucleus. The enzyme catalyses ATP + (deoxyribonucleotide)n-3'-hydroxyl + 5'-phospho-(deoxyribonucleotide)m = (deoxyribonucleotide)n+m + AMP + diphosphate.. Its function is as follows. DNA ligase involved in DNA non-homologous end joining (NHEJ); required for double-strand break (DSB) repair and V(D)J recombination. Catalyzes the NHEJ ligation step of the broken DNA during DSB repair by resealing the DNA breaks after the gap filling is completed. Joins single-strand breaks in a double-stranded polydeoxynucleotide in an ATP-dependent reaction. LIG4 is mechanistically flexible: it can ligate nicks as well as compatible DNA overhangs alone, while in the presence of XRCC4, it can ligate ends with 2-nucleotides (nt) microhomology and 1-nt gaps. Forms a subcomplex with XRCC4; the LIG4-XRCC4 subcomplex is responsible for the NHEJ ligation step and XRCC4 enhances the joining activity of LIG4. Binding of the LIG4-XRCC4 complex to DNA ends is dependent on the assembly of the DNA-dependent protein kinase complex DNA-PK to these DNA ends. LIG4 regulates nuclear localization of XRCC4. The polypeptide is DNA ligase 4 (Mus musculus (Mouse)).